The sequence spans 252 residues: Small ribosomal subunit protein uS2A (252 aa).

Ser-2 is modified (N-acetylserine). The disordered stretch occupies residues 209 to 252 (EVEQQVAEEATTEEAGEEEAKEEVTEEQAEATEWAEENADNVEW). The segment covering 218–252 (ATTEEAGEEEAKEEVTEEQAEATEWAEENADNVEW) has biased composition (acidic residues).

This sequence belongs to the universal ribosomal protein uS2 family. In terms of assembly, component of the small ribosomal subunit. Mature ribosomes consist of a small (40S) and a large (60S) subunit. The 40S subunit contains about 33 different proteins and 1 molecule of RNA (18S). The 60S subunit contains about 49 different proteins and 3 molecules of RNA (25S, 5.8S and 5S). Interacts with RPS21.

Its subcellular location is the cytoplasm. Required for the assembly and/or stability of the 40S ribosomal subunit. Required for the processing of the 20S rRNA-precursor to mature 18S rRNA in a late step of the maturation of 40S ribosomal subunits. This Saccharomyces cerevisiae (strain RM11-1a) (Baker's yeast) protein is Small ribosomal subunit protein uS2A.